The primary structure comprises 79 residues: MAGGRRGGRRRKKVCYFTSNGITHIDYKDVELLKKFVSERGKILPRRVTGTSAKYQRKLTVAIKRSRQMALLPFVAEEK.

Belongs to the bacterial ribosomal protein bS18 family. As to quaternary structure, part of the 30S ribosomal subunit. Forms a tight heterodimer with protein bS6.

Binds as a heterodimer with protein bS6 to the central domain of the 16S rRNA, where it helps stabilize the platform of the 30S subunit. In Listeria innocua serovar 6a (strain ATCC BAA-680 / CLIP 11262), this protein is Small ribosomal subunit protein bS18.